A 190-amino-acid polypeptide reads, in one-letter code: D-glycero-beta-D-manno-heptose-1,7-bisphosphate 7-phosphatase (190 aa).

Asp-11 acts as the Nucleophile in catalysis. Residues Asp-11 and Asp-13 each coordinate Mg(2+). Residues 11–13 (DRD), 19–22 (DHGY), and 53–56 (TNQS) each bind substrate. The active-site Proton donor is Asp-13. Residues Cys-92, His-94, Cys-107, and Cys-109 each contribute to the Zn(2+) site. 110–111 (RK) is a substrate binding site. Mg(2+) is bound by residues Asp-136 and Lys-137. Lys-137 contacts substrate.

Belongs to the GmhB family. In terms of assembly, monomer. It depends on Mg(2+) as a cofactor. Requires Zn(2+) as cofactor.

It localises to the cytoplasm. The catalysed reaction is D-glycero-beta-D-manno-heptose 1,7-bisphosphate + H2O = D-glycero-beta-D-manno-heptose 1-phosphate + phosphate. It functions in the pathway nucleotide-sugar biosynthesis; ADP-L-glycero-beta-D-manno-heptose biosynthesis; ADP-L-glycero-beta-D-manno-heptose from D-glycero-beta-D-manno-heptose 7-phosphate: step 2/4. The protein operates within bacterial outer membrane biogenesis; LPS core biosynthesis. In terms of biological role, converts the D-glycero-beta-D-manno-heptose 1,7-bisphosphate intermediate into D-glycero-beta-D-manno-heptose 1-phosphate by removing the phosphate group at the C-7 position. In Escherichia coli O6:H1 (strain CFT073 / ATCC 700928 / UPEC), this protein is D-glycero-beta-D-manno-heptose-1,7-bisphosphate 7-phosphatase (gmhB).